The sequence spans 416 residues: Elongation factor 1-gamma 3 (416 aa).

Residues 1–82 form the GST N-terminal domain; that stretch reads MALVLHCGSG…YVARLKDNSS (82 aa). The 129-residue stretch at 87-215 folds into the GST C-terminal domain; it reads SLIDYSHIEQ…FKQAESVPPV (129 aa). The interval 213-263 is disordered; sequence PPVQKKAAPPKESKAKEAKKEAPKEAPKPKVEASEEEEAPKPKPKNPLDLL. A compositionally biased stretch (basic and acidic residues) spans 221–245; it reads PPKESKAKEAKKEAPKEAPKPKVEA. Positions 256-416 constitute an EF-1-gamma C-terminal domain; it reads PKNPLDLLPP…EDLLDAKCFK (161 aa).

EF-1 is composed of four subunits: alpha, beta, delta, and gamma.

Functionally, probably plays a role in anchoring the complex to other cellular components. This is Elongation factor 1-gamma 3 from Oryza sativa subsp. japonica (Rice).